The primary structure comprises 619 residues: Serine/threonine-protein kinase pkn1 (619 aa).

One can recognise a Protein kinase domain in the interval 15-302; it reads YRILYRKGQS…SSQNLPQAVL (288 aa). 21-29 provides a ligand contact to ATP; the sequence is KGQSLWSED. Catalysis depends on Glu141, which acts as the Proton acceptor.

It belongs to the protein kinase superfamily. Ser/Thr protein kinase family. Post-translationally, autophosphorylated on serine and threonine residues.

It catalyses the reaction L-seryl-[protein] + ATP = O-phospho-L-seryl-[protein] + ADP + H(+). The enzyme catalyses L-threonyl-[protein] + ATP = O-phospho-L-threonyl-[protein] + ADP + H(+). Functionally, together with the serine/threonine kinase PknD, may play a role in the specific interactions with host proteins during intracellular growth. The sequence is that of Serine/threonine-protein kinase pkn1 (pkn1) from Chlamydia pneumoniae (Chlamydophila pneumoniae).